We begin with the raw amino-acid sequence, 236 residues long: Purine nucleoside phosphorylase DeoD-type (236 aa).

His5 is an a purine D-ribonucleoside binding site. Phosphate contacts are provided by residues Gly21, Arg25, Arg44, and 88–91; that span reads RVGT. A purine D-ribonucleoside is bound by residues 180-182 and 204-205; these read EME and SD. The active-site Proton donor is the Asp205.

Belongs to the PNP/UDP phosphorylase family. As to quaternary structure, homohexamer; trimer of homodimers.

The enzyme catalyses a purine D-ribonucleoside + phosphate = a purine nucleobase + alpha-D-ribose 1-phosphate. It carries out the reaction a purine 2'-deoxy-D-ribonucleoside + phosphate = a purine nucleobase + 2-deoxy-alpha-D-ribose 1-phosphate. Functionally, catalyzes the reversible phosphorolytic breakdown of the N-glycosidic bond in the beta-(deoxy)ribonucleoside molecules, with the formation of the corresponding free purine bases and pentose-1-phosphate. The sequence is that of Purine nucleoside phosphorylase DeoD-type from Shewanella baltica (strain OS155 / ATCC BAA-1091).